Here is a 1558-residue protein sequence, read N- to C-terminus: Calmodulin-regulated spectrin-associated protein 1-B (1558 aa).

Residues 231–346 form the Calponin-homology (CH) domain; it reads WYWKLVPVRY…FIAELFWWFE (116 aa). Composition is skewed to polar residues over residues 400-417, 440-450, and 504-516; these read VQNSPEVCNSNKGSSGFS, ACRNRSNSLTQ, and ASTVTPKHQSHPG. Disordered regions lie at residues 400 to 464, 504 to 523, 551 to 585, 602 to 675, 737 to 790, 803 to 850, and 943 to 968; these read VQNS…SDKR, ASTVTPKHQSHPGQGSVRRI, NDITLTNSEDTERQGVTPGAKSIWGRQEDASSDSR, AKEK…APGQ, TKEL…VASG, QRFG…QNKD, and DRSKEAEEPEKASCEWAGGGTVSSSP. Residues 602-620 show a composition bias toward basic and acidic residues; it reads AKEKSISLNKEEESGEGRQ. The segment covering 643-658 has biased composition (polar residues); sequence QTLNRTFTPNTSSEFE. Positions 737–772 are enriched in basic and acidic residues; the sequence is TKELHPDKKQHFEEEVESAKLREDMNVKEHEDKDGG. 2 stretches are compositionally biased toward low complexity: residues 776–790 and 812–822; these read SSPGQQSQVSSVASG and RSSTSSSQRTT. The stretch at 849–887 forms a coiled coil; the sequence is KDNANMLASELVQLHMQLEEKRRAIESQKKKMEILTARQ. Basic and acidic residues predominate over residues 943-955; it reads DRSKEAEEPEKAS. Residues 971–1004 are a coiled coil; the sequence is VEEEVDLNECNRSIELLNEAIGSIQQQMMQLSLQ. Disordered stretches follow at residues 1041–1131, 1257–1293, 1305–1344, and 1360–1414; these read FVEP…TFHL, LRKQQLEAESEQKRDETRRKAEEERIRKEEEKARREL, ELCEEQEQPQPKPKTKPKKQRLKSVVKEEPSIDPLPKCPA, and LASV…ITST. Over residues 1080-1090 the composition is skewed to low complexity; it reads SSTPTPTDSPS. Positions 1106-1115 are enriched in polar residues; that stretch reads DFVQSSVRSE. Positions 1243–1303 form a coiled coil; it reads AFLLKQQRKA…IKQEYLRKKQ (61 aa). The segment covering 1317–1328 has biased composition (basic residues); sequence PKTKPKKQRLKS. One can recognise a CKK domain in the interval 1421–1555; sequence GPKLFKEPSA…QAKRPAGPKK (135 aa).

This sequence belongs to the CAMSAP1 family.

The protein resides in the cytoplasm. It is found in the cytoskeleton. Functionally, key microtubule-organizing protein that specifically binds the minus-end of non-centrosomal microtubules and regulates their dynamics and organization. Specifically recognizes growing microtubule minus-ends and stabilizes microtubules. Acts on free microtubule minus-ends that are not capped by microtubule-nucleating proteins or other factors and protects microtubule minus-ends from depolymerization. In contrast to camsap2 and camsap3, tracks along the growing tips of minus-end microtubules without significantly affecting the polymerization rate: binds at the very tip of the microtubules minus-end and acts as a minus-end tracking protein (-TIP) that dissociates from microtubules after allowing tubulin incorporation. Through interaction with spectrin may regulate neurite outgrowth. This chain is Calmodulin-regulated spectrin-associated protein 1-B (camsap1b), found in Danio rerio (Zebrafish).